The following is a 55-amino-acid chain: Large ribosomal subunit protein bL33 (55 aa).

The protein belongs to the bacterial ribosomal protein bL33 family.

This is Large ribosomal subunit protein bL33 from Azorhizobium caulinodans (strain ATCC 43989 / DSM 5975 / JCM 20966 / LMG 6465 / NBRC 14845 / NCIMB 13405 / ORS 571).